A 122-amino-acid chain; its full sequence is MIQMQTRLDVADNSGARQVQCIKVLGGSKRMIAGVGDIIVVSVKEAIPRGRVKKGDVHRAVIVRTAKEIRRPDGTSIRFDRNAAVLLNKQNEPIGTRIFGPVVRELRARKFMKIISLAPEVL.

The protein belongs to the universal ribosomal protein uL14 family. In terms of assembly, part of the 50S ribosomal subunit. Forms a cluster with proteins L3 and L19. In the 70S ribosome, L14 and L19 interact and together make contacts with the 16S rRNA in bridges B5 and B8.

Binds to 23S rRNA. Forms part of two intersubunit bridges in the 70S ribosome. This is Large ribosomal subunit protein uL14 from Rhodospirillum rubrum (strain ATCC 11170 / ATH 1.1.1 / DSM 467 / LMG 4362 / NCIMB 8255 / S1).